The following is a 310-amino-acid chain: Alpha/beta hydrolase domain-containing protein 17A (310 aa).

Residues 38–61 (VPEPEPGPGGAGAAPSGPLRTSAA) form a disordered region. Active-site charge relay system residues include Ser190, Asp255, and His284. Ser307 is modified (phosphoserine).

It belongs to the AB hydrolase superfamily. ABHD17 family. In terms of processing, palmitoylated on cysteine residues located in a cysteine cluster at the N-terminus which promotes membrane localization. Palmitoylation is required for post-synaptic localization and for depalmitoylating activity towards DLG4/PSD95.

The protein localises to the cell membrane. The protein resides in the endosome membrane. It localises to the cell projection. Its subcellular location is the dendritic spine. It is found in the postsynaptic density membrane. The enzyme catalyses S-hexadecanoyl-L-cysteinyl-[protein] + H2O = L-cysteinyl-[protein] + hexadecanoate + H(+). Functionally, hydrolyzes fatty acids from S-acylated cysteine residues in proteins. Has depalmitoylating activity towards NRAS. Has depalmitoylating activity towards DLG4/PSD95. May have depalmitoylating activity towars MAP6. This Mus musculus (Mouse) protein is Alpha/beta hydrolase domain-containing protein 17A.